We begin with the raw amino-acid sequence, 572 residues long: Phosphoenolpyruvate-protein phosphotransferase (572 aa).

Histidine 190 acts as the Tele-phosphohistidine intermediate in catalysis. Positions 297 and 333 each coordinate phosphoenolpyruvate. Positions 432 and 456 each coordinate Mg(2+). Phosphoenolpyruvate-binding positions include 455–456 and arginine 466; that span reads ND. Cysteine 503 acts as the Proton donor in catalysis.

This sequence belongs to the PEP-utilizing enzyme family. In terms of assembly, homodimer. Mg(2+) serves as cofactor.

The protein resides in the cytoplasm. It carries out the reaction L-histidyl-[protein] + phosphoenolpyruvate = N(pros)-phospho-L-histidyl-[protein] + pyruvate. Its function is as follows. General (non sugar-specific) component of the phosphoenolpyruvate-dependent sugar phosphotransferase system (sugar PTS). This major carbohydrate active-transport system catalyzes the phosphorylation of incoming sugar substrates concomitantly with their translocation across the cell membrane. Enzyme I transfers the phosphoryl group from phosphoenolpyruvate (PEP) to the phosphoryl carrier protein (HPr). This Listeria innocua serovar 6a (strain ATCC BAA-680 / CLIP 11262) protein is Phosphoenolpyruvate-protein phosphotransferase (ptsI).